The primary structure comprises 55 residues: Large ribosomal subunit protein bL33 (55 aa).

This sequence belongs to the bacterial ribosomal protein bL33 family.

The chain is Large ribosomal subunit protein bL33 from Photorhabdus laumondii subsp. laumondii (strain DSM 15139 / CIP 105565 / TT01) (Photorhabdus luminescens subsp. laumondii).